A 185-amino-acid chain; its full sequence is Dirigent protein 12 (185 aa).

A signal peptide spans 1 to 25; the sequence is MTNQIYKQVFSFFLSVLLLQSSTVS. Cysteine 37 and cysteine 184 form a disulfide bridge. Asparagine 56 and asparagine 120 each carry an N-linked (GlcNAc...) asparagine glycan.

It belongs to the plant dirigent protein family. As to quaternary structure, homodimer. Seed coat specific expression.

It localises to the secreted. Its subcellular location is the extracellular space. The protein localises to the apoplast. Functionally, dirigent proteins impart stereoselectivity on the phenoxy radical-coupling reaction, yielding optically active lignans from two molecules of coniferyl alcohol in the biosynthesis of lignans, flavonolignans, and alkaloids and thus plays a central role in plant secondary metabolism. Required for seed accumulation of neolignans. This Arabidopsis thaliana (Mouse-ear cress) protein is Dirigent protein 12 (DIR12).